The primary structure comprises 991 residues: Valine--tRNA ligase (991 aa).

The 'HIGH' region motif lies at proline 43 to histidine 53. Residues lysine 582–serine 586 carry the 'KMSKS' region motif. Position 585 (lysine 585) interacts with ATP. The segment at alanine 689 to arginine 711 is disordered. Positions alanine 693–alanine 704 are enriched in low complexity. A coiled-coil region spans residues leucine 925–arginine 988.

It belongs to the class-I aminoacyl-tRNA synthetase family. ValS type 1 subfamily. As to quaternary structure, monomer.

It is found in the cytoplasm. The enzyme catalyses tRNA(Val) + L-valine + ATP = L-valyl-tRNA(Val) + AMP + diphosphate. Functionally, catalyzes the attachment of valine to tRNA(Val). As ValRS can inadvertently accommodate and process structurally similar amino acids such as threonine, to avoid such errors, it has a 'posttransfer' editing activity that hydrolyzes mischarged Thr-tRNA(Val) in a tRNA-dependent manner. In Xylella fastidiosa (strain M12), this protein is Valine--tRNA ligase.